Reading from the N-terminus, the 251-residue chain is uncharacterized protein (251 aa).

This sequence to M.jannaschii MJ1311.

This is an uncharacterized protein from Methanocaldococcus jannaschii (strain ATCC 43067 / DSM 2661 / JAL-1 / JCM 10045 / NBRC 100440) (Methanococcus jannaschii).